The chain runs to 580 residues: uncharacterized protein (580 aa).

The span at 1 to 44 shows a compositional bias: polar residues; sequence MSESSVNADTPKNTNDVLNGAYQSATTEPEGQYRSATDNPSLYQ. A disordered region spans residues 1-45; it reads MSESSVNADTPKNTNDVLNGAYQSATTEPEGQYRSATDNPSLYQV. Phosphoserine is present on Ser-99. A run of 12 helical transmembrane segments spans residues 143 to 163, 177 to 197, 207 to 227, 235 to 255, 265 to 285, 295 to 315, 370 to 390, 405 to 425, 450 to 470, 476 to 496, 511 to 533, and 546 to 566; these read IYAYASLTIAWGSSVLSPASA, LLNVSLFMLGYCLGPICWAPM, LYIGLFLFSVFQIAVATAQDI, FFGGYGACVPLCVVAAAFADM, ITIFAAVIFVGPLVAPIVGGF, WTEYITSFMGFLSIILIYLFC, PIVFLVSLYCSFVYAIIYLLL, LGVSALPYIGILVGVFIGCGI, LPPMMIGSFLFPAGIFWLAWS, VHWIVPTLSGLLTGAGILLIF, AASVFAANVIMRSAVAGGFPLFA, and GSLLGFIATALIPMPFAFFFF.

The protein belongs to the major facilitator superfamily. CAR1 family.

Its subcellular location is the membrane. This is an uncharacterized protein from Schizosaccharomyces pombe (strain 972 / ATCC 24843) (Fission yeast).